Here is a 289-residue protein sequence, read N- to C-terminus: Delta-sarcoglycan (289 aa).

Residues 1-35 are Cytoplasmic-facing; that stretch reads MPQEQYTHHRSTMPGSVGPQVYKVGIYGWRKRCLY. The chain crosses the membrane as a helical; Signal-anchor for type II membrane protein span at residues 36-56; sequence FFVLLLMILILVNLAMTIWIL. The Extracellular segment spans residues 57-289; it reads KVMNFTIDGM…TCQINTSVCL (233 aa). N-linked (GlcNAc...) asparagine glycosylation is found at Asn-60 and Asn-108. 2 disulfides stabilise this stretch: Cys-263–Cys-288 and Cys-265–Cys-281. Asn-284 is a glycosylation site (N-linked (GlcNAc...) asparagine).

It belongs to the sarcoglycan beta/delta/gamma/zeta family. Interacts with FLNC and DAG1. Cross-link to form 2 major subcomplexes: one consisting of SGCB, SGCD and SGCG and the other consisting of SGCB and SGCD. The association between SGCB and SGCG is particularly strong while SGCA is loosely associated with the other sarcoglycans. Glycosylated. In terms of processing, disulfide bonds are present. In terms of tissue distribution, most strongly expressed in skeletal and cardiac muscle. Also detected in smooth muscle. Weak expression in brain and lung.

It localises to the cell membrane. The protein resides in the sarcolemma. Its subcellular location is the cytoplasm. It is found in the cytoskeleton. In terms of biological role, component of the sarcoglycan complex, a subcomplex of the dystrophin-glycoprotein complex which forms a link between the F-actin cytoskeleton and the extracellular matrix. The protein is Delta-sarcoglycan (SGCD) of Homo sapiens (Human).